We begin with the raw amino-acid sequence, 439 residues long: Secreted RxLR effector protein 117 (439 aa).

Residues 1 to 21 form the signal peptide; that stretch reads MRGAYYVLAALLVVASSQIAA. A RxLR-dEER motif is present at residues 48–65; that stretch reads RYLRGGHDVHDDSANEER.

The protein belongs to the RxLR effector family.

It localises to the secreted. The protein resides in the host nucleus. In terms of biological role, secreted effector that acts as an elicitor that induces cell death in host plant cells. This Plasmopara viticola (Downy mildew of grapevine) protein is Secreted RxLR effector protein 117.